Here is a 967-residue protein sequence, read N- to C-terminus: Isoleucine--tRNA ligase (967 aa).

The 'HIGH' region signature appears at 68-78 (PYANGTLHMGH). An L-isoleucyl-5'-AMP-binding site is contributed by glutamate 583. The 'KMSKS' region motif lies at 624 to 628 (KMSKS). Position 627 (lysine 627) interacts with ATP. Zn(2+) contacts are provided by cysteine 937, cysteine 940, cysteine 957, and cysteine 960.

This sequence belongs to the class-I aminoacyl-tRNA synthetase family. IleS type 1 subfamily. Monomer. The cofactor is Zn(2+).

The protein resides in the cytoplasm. It carries out the reaction tRNA(Ile) + L-isoleucine + ATP = L-isoleucyl-tRNA(Ile) + AMP + diphosphate. Its function is as follows. Catalyzes the attachment of isoleucine to tRNA(Ile). As IleRS can inadvertently accommodate and process structurally similar amino acids such as valine, to avoid such errors it has two additional distinct tRNA(Ile)-dependent editing activities. One activity is designated as 'pretransfer' editing and involves the hydrolysis of activated Val-AMP. The other activity is designated 'posttransfer' editing and involves deacylation of mischarged Val-tRNA(Ile). The polypeptide is Isoleucine--tRNA ligase (Prochlorococcus marinus (strain NATL1A)).